The following is a 394-amino-acid chain: Acid ceramidase (394 aa).

The signal sequence occupies residues 1 to 20; it reads MLGRSLLTWVLAAAVTCAQA. Residues cysteine 30 and cysteine 339 are joined by a disulfide bond. The Nucleophile role is filled by cysteine 142. Asparagine 194, asparagine 258, asparagine 285, and asparagine 341 each carry an N-linked (GlcNAc...) asparagine glycan. Cysteine 387 and cysteine 391 are oxidised to a cystine.

Belongs to the acid ceramidase family. In terms of assembly, heterodimer; disulfide-linked. The heterodimer is composed of the disulfide-linked alpha and beta chains produced by autocatalytic cleavage of the precursor. Post-translationally, N-glycosylated. Proteolytically cleaved into two chains alpha and beta that remain associated via a disulfide bond. Cleavage gives rise to a conformation change that activates the enzyme. The same catalytic Cys residue mediates the autoproteolytic cleavage and subsequent hydrolysis of lipid substrates. The beta chain may undergo an additional C-terminal processing.

It is found in the lysosome. The protein resides in the secreted. The catalysed reaction is an N-acylsphing-4-enine + H2O = sphing-4-enine + a fatty acid. It catalyses the reaction N-dodecanoylsphing-4-enine + H2O = dodecanoate + sphing-4-enine. The enzyme catalyses N-tetradecanoylsphing-4-enine + H2O = tetradecanoate + sphing-4-enine. It carries out the reaction N-hexadecanoylsphing-4-enine + H2O = sphing-4-enine + hexadecanoate. The catalysed reaction is N-octadecanoylsphing-4-enine + H2O = sphing-4-enine + octadecanoate. It catalyses the reaction N-dodecanoyl-(4R)-hydroxysphinganine + H2O = (4R)-hydroxysphinganine + dodecanoate. The enzyme catalyses N-(dodecanoyl)-sphinganine + H2O = dodecanoate + sphinganine. It carries out the reaction N-(acetyl)-sphing-4-enine + H2O = sphing-4-enine + acetate. The catalysed reaction is N-(hexanoyl)sphing-4-enine + H2O = hexanoate + sphing-4-enine. It catalyses the reaction N-octanoylsphing-4-enine + H2O = octanoate + sphing-4-enine. The enzyme catalyses N-(9Z-octadecenoyl)-sphing-4-enine + H2O = sphing-4-enine + (9Z)-octadecenoate. It carries out the reaction N-dodecanoylethanolamine + H2O = dodecanoate + ethanolamine. It participates in lipid metabolism; sphingolipid metabolism. Lysosomal ceramidase that hydrolyzes sphingolipid ceramides into sphingosine and free fatty acids at acidic pH. Ceramides, sphingosine, and its phosphorylated form sphingosine-1-phosphate are bioactive lipids that mediate cellular signaling pathways regulating several biological processes including cell proliferation, apoptosis and differentiation. Has a higher catalytic efficiency towards C12-ceramides versus other ceramides. Also catalyzes the reverse reaction allowing the synthesis of ceramides from fatty acids and sphingosine. For the reverse synthetic reaction, the natural sphingosine D-erythro isomer is more efficiently utilized as a substrate compared to D-erythro-dihydrosphingosine and D-erythro-phytosphingosine, while the fatty acids with chain lengths of 12 or 14 carbons are the most efficiently used. Also has an N-acylethanolamine hydrolase activity. By regulating the levels of ceramides, sphingosine and sphingosine-1-phosphate in the epidermis, mediates the calcium-induced differentiation of epidermal keratinocytes. Also indirectly regulates tumor necrosis factor/TNF-induced apoptosis. By regulating the intracellular balance between ceramides and sphingosine, in adrenocortical cells, probably also acts as a regulator of steroidogenesis. The sequence is that of Acid ceramidase from Rattus norvegicus (Rat).